The sequence spans 126 residues: Copper resistance protein C (126 aa).

The first 24 residues, methionine 1–alanine 24, serve as a signal peptide directing secretion. Cu(2+) is bound at residue histidine 25. Cu(+)-binding residues include methionine 64, methionine 67, methionine 70, histidine 72, and methionine 75. Histidine 115 provides a ligand contact to Cu(2+).

The protein belongs to the CopC family. In terms of assembly, monomer.

The protein resides in the periplasm. With respect to regulation, the redox state of copper bound to CopC may act as a switch between the possible trafficking pathways of the metal ion. Copper-binding protein involved in copper resistance and homeostasis. Probably mediates copper resistance by sequestering the excess of copper in the periplasm. May act as a copper carrier in the oxidizing periplasmic space that exchanges either Cu(I) or Cu(II) with its putative partners CopA, CopB and CopD. In Pseudomonas syringae pv. tomato, this protein is Copper resistance protein C.